Here is a 301-residue protein sequence, read N- to C-terminus: Probable splicing factor ECU05_1440 (301 aa).

The RRM 1 domain maps to 1 to 70 (MQIFIGKIPN…APISVERANG (70 aa)). Disordered stretches follow at residues 106–140 (PPMR…SFRM) and 255–301 (SKDE…AEND). 2 stretches are compositionally biased toward basic and acidic residues: residues 110 to 140 (YESR…SFRM) and 255 to 270 (SKDE…HMRS). Positions 182–255 (LKVVFENIAP…HILKTRSYLS (74 aa)) constitute an RRM 2 domain.

This sequence belongs to the splicing factor SR family.

The protein localises to the nucleus. In terms of biological role, plays a role in splicing. The protein is Probable splicing factor ECU05_1440 of Encephalitozoon cuniculi (strain GB-M1) (Microsporidian parasite).